A 79-amino-acid polypeptide reads, in one-letter code: Probable 26S proteasome complex subunit sem1 (79 aa).

Positions 1–21 are enriched in basic and acidic residues; that stretch reads MSAPDKEKEKEKEETNNKSED. The interval 1–30 is disordered; sequence MSAPDKEKEKEKEETNNKSEDLGLLEEDDE. S19 carries the post-translational modification Phosphoserine.

It belongs to the DSS1/SEM1 family. Part of the 26S proteasome.

Its function is as follows. Subunit of the 26S proteasome which plays a role in ubiquitin-dependent proteolysis. The chain is Probable 26S proteasome complex subunit sem1 from Drosophila melanogaster (Fruit fly).